The primary structure comprises 2727 residues: E3 ubiquitin-protein ligase Ufd4 (2727 aa).

Disordered regions lie at residues 247 to 271 and 365 to 389; these read THSS…TNSD and RGSN…TDRT. Residues 365–374 are compositionally biased toward polar residues; the sequence is RGSNNPNQGQ. ANK repeat units lie at residues 422-451, 453-482, and 486-518; these read VGQT…DVNK, QRSS…YPDL, and DGKT…WMSP. Positions 682–702 are disordered; that stretch reads AQRSSTSVVVAPRPTSDDPME. The region spanning 1322-1392 is the MIB/HERC2 domain; that stretch reads QIRAQLKHMT…KYDLKLADCE (71 aa). Polar residues-rich tracts occupy residues 1401–1430 and 1437–1448; these read QSMG…STPS and KNQNPEGASNQT. 6 disordered regions span residues 1401–1448, 1483–1512, 1570–1592, 1845–1871, 1905–1930, and 2092–2115; these read QSMG…SNQT, NTSS…GPSP, ESVT…REND, YPSL…QQSA, ALLG…DEYE, and STCL…ASTL. Residues 1575–1592 show a composition bias toward low complexity; that stretch reads SQSSSHPDVQSSSPREND. Over residues 1909–1930 the composition is skewed to acidic residues; sequence DLDDEDDMDEDNDEEENEDEYE. Polar residues predominate over residues 2104–2115; it reads PDVSSKSGASTL. The 439-residue stretch at 2289–2727 folds into the HECT domain; it reads RKSVLEVEFL…ATKEKGFHLN (439 aa). The Glycyl thioester intermediate role is filled by Cys-2696.

The protein belongs to the UPL family. K-HECT subfamily.

It carries out the reaction S-ubiquitinyl-[E2 ubiquitin-conjugating enzyme]-L-cysteine + [acceptor protein]-L-lysine = [E2 ubiquitin-conjugating enzyme]-L-cysteine + N(6)-ubiquitinyl-[acceptor protein]-L-lysine.. It functions in the pathway protein modification; protein ubiquitination. Its function is as follows. E3 ubiquitin-protein ligase which accepts ubiquitin from an E2 ubiquitin-conjugating enzyme in the form of a thioester and then directly transfers the ubiquitin to targeted substrates. Involved in the negative regulation of the Ras/MAPK signaling pathway in the wing by acting with the E2 enzyme Unc6 and the putative E3 ligases poe and Kcmf1 to mediate the ubiquitination and proteasomal degradation of rl/MAPK. The chain is E3 ubiquitin-protein ligase Ufd4 from Drosophila melanogaster (Fruit fly).